We begin with the raw amino-acid sequence, 433 residues long: UDP-N-acetylglucosamine 1-carboxyvinyltransferase (433 aa).

34-35 is a binding site for phosphoenolpyruvate; sequence KN. Arginine 104 is a binding site for UDP-N-acetyl-alpha-D-glucosamine. Cysteine 128 functions as the Proton donor in the catalytic mechanism. The residue at position 128 (cysteine 128) is a 2-(S-cysteinyl)pyruvic acid O-phosphothioketal. Residues aspartate 320 and isoleucine 342 each contribute to the UDP-N-acetyl-alpha-D-glucosamine site.

This sequence belongs to the EPSP synthase family. MurA subfamily.

The protein resides in the cytoplasm. The enzyme catalyses phosphoenolpyruvate + UDP-N-acetyl-alpha-D-glucosamine = UDP-N-acetyl-3-O-(1-carboxyvinyl)-alpha-D-glucosamine + phosphate. It participates in cell wall biogenesis; peptidoglycan biosynthesis. In terms of biological role, cell wall formation. Adds enolpyruvyl to UDP-N-acetylglucosamine. In Synechococcus sp. (strain CC9605), this protein is UDP-N-acetylglucosamine 1-carboxyvinyltransferase.